We begin with the raw amino-acid sequence, 340 residues long: Sodium/bile acid cotransporter 7 (340 aa).

Residues 1–10 (MRLLERVRKE) are Cytoplasmic-facing. Residues 11–31 (WFMVGIVVAIGAAKLEPSVGV) form a helical membrane-spanning segment. The Extracellular portion of the chain corresponds to 32-37 (NGGPLK). Residues 38–58 (PEITVSYIAVATIFFNSGLSL) traverse the membrane as a helical segment. At 59–71 (KTEELTSALVHLK) the chain is on the cytoplasmic side. A helical transmembrane segment spans residues 72–92 (LHLFIQVFTLAFFPTTIWLFL). At 93–116 (QLLSVTSINEWLLKGLQTVGCMPP) the chain is on the extracellular side. The helical transmembrane segment at 117-137 (PVSSAVILTKAVGGNEAAAIF) threads the bilayer. Residue Asn138 is a topological domain, cytoplasmic. A helical transmembrane segment spans residues 139–159 (SAFGSFLGIVVTPVLLLLFLG). The Extracellular segment spans residues 160–163 (SSSS). A helical transmembrane segment spans residues 164 to 184 (VPFTSIFSQLFMTVVVPLVIG). The Cytoplasmic segment spans residues 185-201 (QIVRRYIKDWLERKKPP). A helical membrane pass occupies residues 202 to 222 (FGVVSSSVLLMIIYTTFCDTF). Topologically, residues 223–234 (SNPNIDLDKFSL) are extracellular. The helical transmembrane segment at 235-255 (ILILFIIVSIQLSFMLLTFVF) threads the bilayer. The Cytoplasmic segment spans residues 256 to 270 (STRNNSGFTPADTVA). A helical transmembrane segment spans residues 271-291 (IIFCSTHKSLTLGIPMLKIVF). Over 292 to 298 (AGHEHLS) the chain is Extracellular. Residues 299 to 319 (LISLPLLIYHPAQILLGSVLV) form a helical membrane-spanning segment. The Cytoplasmic portion of the chain corresponds to 320 to 340 (PTIKSWMVSRQKGVKLTRPTV).

This sequence belongs to the bile acid:sodium symporter (BASS) (TC 2.A.28) family. In terms of tissue distribution, strongly expressed in liver, adrenal gland, small intestine and colon. Moderately expressed in heart, lung, kidney and spleen. Weakly expressed in brain.

Its subcellular location is the cell membrane. The protein localises to the endoplasmic reticulum membrane. It localises to the golgi apparatus membrane. Involved in teeth and skeletal development. Has an essential role in the biosynthesis and trafficking of glycosaminoglycans and glycoproteins to produce a proper functioning extracellular matrix. Required for extracellular matrix mineralization. Also involved in the regulation of cellular calcium homeostasis. Does not show transport activity towards bile acids or steroid sulfates (including taurocholate, cholate, chenodeoxycholate, estrone-3-sulfate, dehydroepiandrosterone sulfate (DHEAS) and pregnenolone sulfate). In Rattus norvegicus (Rat), this protein is Sodium/bile acid cotransporter 7 (Slc10a7).